The primary structure comprises 447 residues: N-succinylarginine dihydrolase (447 aa).

Residues 19–28 (AGLSFGNEAS), Asn110, and 137–138 (HR) contribute to the substrate site. The active site involves Glu174. Arg212 provides a ligand contact to substrate. His248 is an active-site residue. Substrate-binding residues include Asp250 and Asn359. Residue Cys365 is the Nucleophile of the active site.

Belongs to the succinylarginine dihydrolase family. As to quaternary structure, homodimer.

It catalyses the reaction N(2)-succinyl-L-arginine + 2 H2O + 2 H(+) = N(2)-succinyl-L-ornithine + 2 NH4(+) + CO2. Its pathway is amino-acid degradation; L-arginine degradation via AST pathway; L-glutamate and succinate from L-arginine: step 2/5. Its function is as follows. Catalyzes the hydrolysis of N(2)-succinylarginine into N(2)-succinylornithine, ammonia and CO(2). This chain is N-succinylarginine dihydrolase, found in Escherichia coli O81 (strain ED1a).